Reading from the N-terminus, the 1221-residue chain is Probable serine/threonine-protein kinase DDB_G0286465 (1221 aa).

3 disordered regions span residues 1 to 37 (MTLRLDTSLKRGASRNIPPIPTFSSVSNENLSSSPYT), 104 to 133 (FSPSTGRTKNNNNNNNNNINNNNYKKNDNQ), and 173 to 263 (ENNS…NNNE). 4 stretches are compositionally biased toward low complexity: residues 24-37 (SSVSNENLSSSPYT), 112-127 (KNNNNNNNNNINNNNY), 173-192 (ENNSQNNNNNKYQINNNMQK), and 204-263 (NNNN…NNNE). Residues 186–627 (INNNMQKTGG…PYKLLDHPFF (442 aa)) form the Protein kinase domain. Residue 192 to 200 (KTGGRNGSV) participates in ATP binding. Lysine 271 is a binding site for ATP. Over residues 324–344 (NVNNNNSNNNNNNSNNNITNS) the composition is skewed to low complexity. The interval 324–346 (NVNNNNSNNNNNNSNNNITNSRY) is disordered. Aspartate 448 serves as the catalytic Proton acceptor. 2 stretches are compositionally biased toward low complexity: residues 538–550 (SPSSSSTTSTSTS) and 559–584 (DSSSSASSSSSSSSSSSSSSSSSLPK). Disordered stretches follow at residues 538–604 (SPSS…PEKR), 712–782 (PNLS…KEKL), 823–858 (KFEKKQRQIQDSEKVNKNEEENQTKDDADNISPPLP), 959–1008 (KENI…SYCN), and 1105–1152 (KKQE…QQEK). A compositionally biased stretch (basic and acidic residues) spans 591-604 (RSKDNQSKLDPEKR). A compositionally biased stretch (low complexity) spans 725-738 (KKQLQQYQQQQKQQ). The segment covering 746-756 (DDEEEKEEEEK) has biased composition (acidic residues). Composition is skewed to basic and acidic residues over residues 757-769 (EKEKEKEKEKEKE) and 823-850 (KFEKKQRQIQDSEKVNKNEEENQTKDDA). Low complexity predominate over residues 959-993 (KENIINFHNNNNNNNNNNNNNNNNNNNNNNNNNNN).

This sequence belongs to the protein kinase superfamily. Ser/Thr protein kinase family.

It catalyses the reaction L-seryl-[protein] + ATP = O-phospho-L-seryl-[protein] + ADP + H(+). The catalysed reaction is L-threonyl-[protein] + ATP = O-phospho-L-threonyl-[protein] + ADP + H(+). The polypeptide is Probable serine/threonine-protein kinase DDB_G0286465 (Dictyostelium discoideum (Social amoeba)).